The following is a 332-amino-acid chain: Anthranilate phosphoribosyltransferase (332 aa).

5-phospho-alpha-D-ribose 1-diphosphate contacts are provided by residues Gly-79, 82–83, Ser-87, 89–92, 107–115, and Ser-119; these read GD, NIST, and KHGNRSVSS. Position 79 (Gly-79) interacts with anthranilate. Ser-91 lines the Mg(2+) pocket. Asn-110 is an anthranilate binding site. Position 165 (Arg-165) interacts with anthranilate. Mg(2+) contacts are provided by Asp-223 and Glu-224.

This sequence belongs to the anthranilate phosphoribosyltransferase family. As to quaternary structure, homodimer. Requires Mg(2+) as cofactor.

It catalyses the reaction N-(5-phospho-beta-D-ribosyl)anthranilate + diphosphate = 5-phospho-alpha-D-ribose 1-diphosphate + anthranilate. Its pathway is amino-acid biosynthesis; L-tryptophan biosynthesis; L-tryptophan from chorismate: step 2/5. Functionally, catalyzes the transfer of the phosphoribosyl group of 5-phosphorylribose-1-pyrophosphate (PRPP) to anthranilate to yield N-(5'-phosphoribosyl)-anthranilate (PRA). The chain is Anthranilate phosphoribosyltransferase from Serratia proteamaculans (strain 568).